Reading from the N-terminus, the 314-residue chain is Putative steroid dehydrogenase 1 (314 aa).

An NADP(+)-binding site is contributed by 47–76 (ASWAVVTGATDGIGKSYSFELAKRGFNVYI). The active site involves Y202.

It belongs to the short-chain dehydrogenases/reductases (SDR) family. 17-beta-HSD 3 subfamily.

This chain is Putative steroid dehydrogenase 1 (stdh-1), found in Caenorhabditis elegans.